Consider the following 440-residue polypeptide: Zinc finger MYND domain-containing protein 10 (440 aa).

Zn(2+) is bound by residues Cys-394, Cys-397, Cys-405, Cys-408, Cys-414, Cys-418, His-426, and Cys-430. An MYND-type zinc finger spans residues 394–430; the sequence is CGYCNAEASKRCSRCQNVWYCCRECQVKHWEKHGKTC.

The protein belongs to the ZMYND10 family. As to quaternary structure, interacts (via C-terminus) with DNAAF11 (via CS domain); this interaction stabilizes DNAAF11 at the protein level. Interacts (via C-terminus) with DNAL1; this interaction stabilizes DNAL1 at the protein level. Interacts with DNAAF4, HSPA8, IQUB, RUVBL2 and DYNTL5. Expressed in the testis. Expressed in the tracheal epithelium. Restricted to regions containing motile cilia.

The protein localises to the cytoplasm. It is found in the cytoskeleton. Its subcellular location is the microtubule organizing center. It localises to the centrosome. The protein resides in the centriolar satellite. The protein localises to the apical cell membrane. It is found in the dynein axonemal particle. Its function is as follows. Plays a role in axonemal structure organization and motility. Involved in axonemal pre-assembly of inner and outer dynein arms (IDA and ODA, respectively) for proper axoneme building for cilia motility. May act by indirectly regulating transcription of dynein proteins. The polypeptide is Zinc finger MYND domain-containing protein 10 (Zmynd10) (Mus musculus (Mouse)).